Reading from the N-terminus, the 267-residue chain is NAD(P)H-hydrate epimerase (267 aa).

Residues 27 to 242 (AQKIDEDLMS…DLEAKFDLQL (216 aa)) enclose the YjeF N-terminal domain. 78-82 (NQGGD) contacts (6S)-NADPHX. Q79 and D142 together coordinate K(+). Residues 146–152 (GFNFKGD) and D185 each bind (6S)-NADPHX. S188 contacts K(+).

This sequence belongs to the NnrE/AIBP family. The cofactor is K(+).

The protein localises to the cytoplasm. The protein resides in the mitochondrion. It carries out the reaction (6R)-NADHX = (6S)-NADHX. The enzyme catalyses (6R)-NADPHX = (6S)-NADPHX. Catalyzes the epimerization of the S- and R-forms of NAD(P)HX, a damaged form of NAD(P)H that is a result of enzymatic or heat-dependent hydration. This is a prerequisite for the S-specific NAD(P)H-hydrate dehydratase to allow the repair of both epimers of NAD(P)HX. The polypeptide is NAD(P)H-hydrate epimerase (Mycosarcoma maydis (Corn smut fungus)).